Here is a 406-residue protein sequence, read N- to C-terminus: Lysine-specific demethylase 8 (406 aa).

Over residues 143–152 the composition is skewed to basic and acidic residues; it reads KAERSEEPFS. The tract at residues 143–162 is disordered; it reads KAERSEEPFSKKRKHDCKSE. Residues 270 to 406 enclose the JmjC domain; it reads DQVPELKEDI…LSFSVSFWWS (137 aa). His-311 and Asp-313 together coordinate Fe cation.

Fe(2+) serves as cofactor.

The protein resides in the nucleus. The catalysed reaction is N(6),N(6)-dimethyl-L-lysyl(36)-[histone H3] + 2 2-oxoglutarate + 2 O2 = L-lysyl(36)-[histone H3] + 2 formaldehyde + 2 succinate + 2 CO2. Functionally, histone demethylase required for G2/M phase cell cycle progression. Specifically demethylates dimethylated 'Lys-36' (H3K36me2) of histone H3, an epigenetic repressive mark, thereby acting as a transcription activator. May play a role in the regulation of the circadian clock. This Danio rerio (Zebrafish) protein is Lysine-specific demethylase 8 (kdm8).